The chain runs to 605 residues: MDATRTFFGLPNVHNVPLCLTSNLSLFPQRLLQKHTLPLKPAKKHHLVCVRSTKSSDDLEGSRPSTYFSPSLWGDHFLSVSLDRGEFDELEREIETMKPLVKDMLMSSQSSDKEKIRLIHLLVSLGSSYHFDKEIQDILKHSFTKLDDIIVGEDDLETISIMFEVFRLYGHKMSCDAFDRFRGEDGRFKESLAKDVRGMLQLFEVAHLGTPSEDIMDEASSFAQNHLDSWIGGNVSGATPHLLKHIQNSLYIPRYCNIEVLVAREYISYYEQEEGHNKILLKFAKLNFNFCQFHYIQELKTLTKWWKDLDLASKLPYIRDRLVESHLGGLGPYFEPHYSLGRIIVAKIIMTMVVVDDTYDAHATVPEVAVLTECLQRLNIGADDKLPDYLRTVLESVFEVMGEIEQEMRPKGRSYGVKQVLERFKNVAKADKQLTEWARTGDVPSFDEYMKVGLVTAGMDGYAGYCFIGMEDVSEKEAFEWLSSNPLIIQALNVMFRLANDVGTYETEINRGEVANGLNCYMKQYGVTKEEASQELRKIYSNNKKVVMEEFMNSHDHVPRQVLLRCLNFARLFDVMYTEGDGYSEPKGKIEHFMTSLYVHPIPLS.

Positions 356, 360, 500, 504, and 508 each coordinate Mg(2+). The DDXXD motif signature appears at Asp-356–Asp-360.

Belongs to the terpene synthase family. Tpsa subfamily. The cofactor is Mg(2+). Requires Mn(2+) as cofactor. As to expression, predominantly expressed in flowers and siliques but also in roots and leaves.

It localises to the cytoplasm. It participates in secondary metabolite biosynthesis; terpenoid biosynthesis. The sequence is that of Terpenoid synthase 18 (TPS18) from Arabidopsis thaliana (Mouse-ear cress).